An 864-amino-acid chain; its full sequence is Leucine--tRNA ligase (864 aa).

The short motif at 42 to 52 (PYPSGKLHMGH) is the 'HIGH' region element. The 'KMSKS' region signature appears at 619–623 (KMSKS). K622 is an ATP binding site.

This sequence belongs to the class-I aminoacyl-tRNA synthetase family.

It is found in the cytoplasm. The enzyme catalyses tRNA(Leu) + L-leucine + ATP = L-leucyl-tRNA(Leu) + AMP + diphosphate. The sequence is that of Leucine--tRNA ligase from Wigglesworthia glossinidia brevipalpis.